Consider the following 235-residue polypeptide: tRNA (guanine-N(1)-)-methyltransferase (235 aa).

S-adenosyl-L-methionine-binding positions include glycine 114 and isoleucine 134–leucine 139.

Belongs to the RNA methyltransferase TrmD family. As to quaternary structure, homodimer.

The protein resides in the cytoplasm. It carries out the reaction guanosine(37) in tRNA + S-adenosyl-L-methionine = N(1)-methylguanosine(37) in tRNA + S-adenosyl-L-homocysteine + H(+). Its function is as follows. Specifically methylates guanosine-37 in various tRNAs. This chain is tRNA (guanine-N(1)-)-methyltransferase, found in Ehrlichia ruminantium (strain Gardel).